The sequence spans 161 residues: Allophycocyanin alpha chain (161 aa).

At Asn-71 the chain carries N4-methylasparagine. A (2R,3E)-phycocyanobilin-binding site is contributed by Cys-81.

Belongs to the phycobiliprotein family. As to quaternary structure, heterodimer of an alpha and a beta chain. In terms of processing, contains one covalently linked phycocyanobilin chromophore.

It localises to the plastid. The protein resides in the chloroplast thylakoid membrane. Functionally, light-harvesting photosynthetic bile pigment-protein from the phycobiliprotein complex. Allophycocyanin has a maximum absorption at approximately 650 nanometers. The polypeptide is Allophycocyanin alpha chain (apcA) (Pyropia haitanensis (Red seaweed)).